A 324-amino-acid polypeptide reads, in one-letter code: Acetyl-coenzyme A carboxylase carboxyl transferase subunit alpha (324 aa).

In terms of domain architecture, CoA carboxyltransferase C-terminal spans 37–291 (ILEDKLENLE…NVVLQKTFEQ (255 aa)).

The protein belongs to the AccA family. As to quaternary structure, acetyl-CoA carboxylase is a heterohexamer composed of biotin carboxyl carrier protein (AccB), biotin carboxylase (AccC) and two subunits each of ACCase subunit alpha (AccA) and ACCase subunit beta (AccD).

The protein resides in the cytoplasm. It carries out the reaction N(6)-carboxybiotinyl-L-lysyl-[protein] + acetyl-CoA = N(6)-biotinyl-L-lysyl-[protein] + malonyl-CoA. The protein operates within lipid metabolism; malonyl-CoA biosynthesis; malonyl-CoA from acetyl-CoA: step 1/1. Component of the acetyl coenzyme A carboxylase (ACC) complex. First, biotin carboxylase catalyzes the carboxylation of biotin on its carrier protein (BCCP) and then the CO(2) group is transferred by the carboxyltransferase to acetyl-CoA to form malonyl-CoA. This Bacillus cytotoxicus (strain DSM 22905 / CIP 110041 / 391-98 / NVH 391-98) protein is Acetyl-coenzyme A carboxylase carboxyl transferase subunit alpha.